We begin with the raw amino-acid sequence, 362 residues long: tRNA/tmRNA (uracil-C(5))-methyltransferase (362 aa).

S-adenosyl-L-methionine contacts are provided by Gln186, Tyr214, Asn219, Glu235, and Asp295. The active-site Nucleophile is Cys320. Glu354 (proton acceptor) is an active-site residue.

This sequence belongs to the class I-like SAM-binding methyltransferase superfamily. RNA M5U methyltransferase family. TrmA subfamily.

It carries out the reaction uridine(54) in tRNA + S-adenosyl-L-methionine = 5-methyluridine(54) in tRNA + S-adenosyl-L-homocysteine + H(+). The catalysed reaction is uridine(341) in tmRNA + S-adenosyl-L-methionine = 5-methyluridine(341) in tmRNA + S-adenosyl-L-homocysteine + H(+). Its function is as follows. Dual-specificity methyltransferase that catalyzes the formation of 5-methyluridine at position 54 (m5U54) in all tRNAs, and that of position 341 (m5U341) in tmRNA (transfer-mRNA). In Dechloromonas aromatica (strain RCB), this protein is tRNA/tmRNA (uracil-C(5))-methyltransferase.